Here is a 254-residue protein sequence, read N- to C-terminus: Ankyrin repeat domain-containing protein 7 (254 aa).

ANK repeat units lie at residues 58 to 87 (KYRTPLHLACANGHTDVVLFLIEQQCKINV), 91 to 120 (ENKSPLIKAVQCQNEDCATILLNFGADPDL), 124 to 153 (RYNTVLHYAVCGQSLSLVEKLLEYEADLEA), 157 to 186 (DGYTPLLVAVINNNPKMVKFLLEKGADVNA), and 190 to 219 (YQRTALILAVSGEPPCLVKLLLQQGVELCY).

In terms of tissue distribution, testis specific.

In Homo sapiens (Human), this protein is Ankyrin repeat domain-containing protein 7 (ANKRD7).